Consider the following 213-residue polypeptide: Orotate phosphoribosyltransferase (213 aa).

Residue Lys26 participates in 5-phospho-alpha-D-ribose 1-diphosphate binding. Position 34–35 (34–35 (FF)) interacts with orotate. Residues 72-73 (YK), Arg99, Lys100, Lys103, His105, and 124-132 (DDVITAGTA) contribute to the 5-phospho-alpha-D-ribose 1-diphosphate site. Orotate contacts are provided by Thr128 and Arg156.

It belongs to the purine/pyrimidine phosphoribosyltransferase family. PyrE subfamily. In terms of assembly, homodimer. Mg(2+) serves as cofactor.

The catalysed reaction is orotidine 5'-phosphate + diphosphate = orotate + 5-phospho-alpha-D-ribose 1-diphosphate. It participates in pyrimidine metabolism; UMP biosynthesis via de novo pathway; UMP from orotate: step 1/2. Its function is as follows. Catalyzes the transfer of a ribosyl phosphate group from 5-phosphoribose 1-diphosphate to orotate, leading to the formation of orotidine monophosphate (OMP). The protein is Orotate phosphoribosyltransferase of Photorhabdus laumondii subsp. laumondii (strain DSM 15139 / CIP 105565 / TT01) (Photorhabdus luminescens subsp. laumondii).